The primary structure comprises 1500 residues: DNA-directed RNA polymerase subunit beta' (1500 aa).

The Zn(2+) site is built by C60, C62, C75, and C78. The interval 180 to 199 (DLGGMETAQRSTQRQIEEDY) is disordered. The Mg(2+) site is built by D626, D628, and D630. Zn(2+)-binding residues include C1002, C1075, C1082, and C1085. Residues 1440–1500 (EVQQAEKSAE…DSDHPDLSSL (61 aa)) form a disordered region. Polar residues predominate over residues 1449–1468 (EPTTTALPTTNGHQAPQSDT).

This sequence belongs to the RNA polymerase beta' chain family. In terms of assembly, the RNAP catalytic core consists of 2 alpha, 1 beta, 1 beta' and 1 omega subunit. When a sigma factor is associated with the core the holoenzyme is formed, which can initiate transcription. Mg(2+) serves as cofactor. Requires Zn(2+) as cofactor.

It carries out the reaction RNA(n) + a ribonucleoside 5'-triphosphate = RNA(n+1) + diphosphate. In terms of biological role, DNA-dependent RNA polymerase catalyzes the transcription of DNA into RNA using the four ribonucleoside triphosphates as substrates. This is DNA-directed RNA polymerase subunit beta' from Chloroflexus aggregans (strain MD-66 / DSM 9485).